The sequence spans 153 residues: MSLIPSFFGGRRSSVFDPFSLDVWDPFKDFPFPSSLSAENSAFVSTRVDWKETPEAHVFKADIPGLKKEEVKLEIQDGRVLQISGERNVEKEDKNDTWHRVERSSGKLVRRFRLPENAKVDQVKASMENGVLTVTVPKEEIKKPDVKAIDISG.

Residues 39–153 enclose the sHSP domain; sequence ENSAFVSTRV…PDVKAIDISG (115 aa).

The protein belongs to the small heat shock protein (HSP20) family. Forms oligomeric structures.

Its subcellular location is the cytoplasm. In Glycine max (Soybean), this protein is 17.3 kDa class I heat shock protein (HSP17.3-B).